The following is a 1021-amino-acid chain: Ankyrin repeat- and BTB/POZ domain-containing protein 3-A (1021 aa).

A helical transmembrane segment spans residues 160–180; it reads MVLSWTISVNCITAALSALSL. 4 ANK repeats span residues 515–544, 561–590, 599–628, and 642–671; these read QGMT…DINS, RQGT…NVEG, YTET…DPLI, and GEMN…KDKG. One can recognise a BTB domain in the interval 836–902; it reads SDVTFLVEGK…LYCGGTESLH (67 aa).

The protein resides in the membrane. The chain is Ankyrin repeat- and BTB/POZ domain-containing protein 3-A (abtb3a) from Danio rerio (Zebrafish).